The sequence spans 205 residues: Small ribosomal subunit protein uS4 (205 aa).

Residues 17-46 (ENIWGRPKSPVNKREYGPGQHGQRRKGKLS) form a disordered region. Residues 94 to 157 (SRLDAVVYRA…KQLVIVLESV (64 aa)) enclose the S4 RNA-binding domain.

Belongs to the universal ribosomal protein uS4 family. Part of the 30S ribosomal subunit. Contacts protein S5. The interaction surface between S4 and S5 is involved in control of translational fidelity.

One of the primary rRNA binding proteins, it binds directly to 16S rRNA where it nucleates assembly of the body of the 30S subunit. In terms of biological role, with S5 and S12 plays an important role in translational accuracy. The protein is Small ribosomal subunit protein uS4 of Mesorhizobium japonicum (strain LMG 29417 / CECT 9101 / MAFF 303099) (Mesorhizobium loti (strain MAFF 303099)).